We begin with the raw amino-acid sequence, 290 residues long: MIYYGTMFDHKVRFSIVRMREVVEEARNRHSLSYLATVVLGRALIGAALVTPWLAEKERWTLDIEGNGPIRRVVAQSTSEFTVRGYVANPKVELPLNEKGKFDVAGAIGQGVLRVVRDLGLKTPFVSQLPLVSGEIAEDLAYYFAVSEQIPSAFSIGVLVDSGGVKIAGGFAVQIIDRTLEQEKVELIERNIKNLPYITELFQKAEPLDVLERIFGEKVGFVETAEIRYKCDCNREKAKNALLVLDKKELEDMRKEGKGEVVCKWCNTKYVFSEEELEELLKFKVDNSGS.

2 disulfides stabilise this stretch: C231–C233 and C263–C266.

Belongs to the HSP33 family. In terms of processing, under oxidizing conditions two disulfide bonds are formed involving the reactive cysteines. Under reducing conditions zinc is bound to the reactive cysteines and the protein is inactive.

It is found in the cytoplasm. Functionally, redox regulated molecular chaperone. Protects both thermally unfolding and oxidatively damaged proteins from irreversible aggregation. Plays an important role in the bacterial defense system toward oxidative stress. The protein is 33 kDa chaperonin of Thermotoga petrophila (strain ATCC BAA-488 / DSM 13995 / JCM 10881 / RKU-1).